We begin with the raw amino-acid sequence, 231 residues long: Large ribosomal subunit protein uL1 (231 aa).

This sequence belongs to the universal ribosomal protein uL1 family. In terms of assembly, part of the 50S ribosomal subunit.

In terms of biological role, binds directly to 23S rRNA. The L1 stalk is quite mobile in the ribosome, and is involved in E site tRNA release. Protein L1 is also a translational repressor protein, it controls the translation of the L11 operon by binding to its mRNA. The polypeptide is Large ribosomal subunit protein uL1 (Azoarcus sp. (strain BH72)).